The chain runs to 102 residues: Putative pterin-4-alpha-carbinolamine dehydratase (102 aa).

This sequence belongs to the pterin-4-alpha-carbinolamine dehydratase family.

The catalysed reaction is (4aS,6R)-4a-hydroxy-L-erythro-5,6,7,8-tetrahydrobiopterin = (6R)-L-erythro-6,7-dihydrobiopterin + H2O. This Burkholderia multivorans (strain ATCC 17616 / 249) protein is Putative pterin-4-alpha-carbinolamine dehydratase.